The sequence spans 874 residues: DNA mismatch repair protein MutS (874 aa).

Position 613–620 (613–620) interacts with ATP; the sequence is GPNMGGKS. The interval 799–820 is disordered; the sequence is EAGSTPSPAPVSVNEPKPAAPT.

This sequence belongs to the DNA mismatch repair MutS family.

This protein is involved in the repair of mismatches in DNA. It is possible that it carries out the mismatch recognition step. This protein has a weak ATPase activity. This Marinobacter nauticus (strain ATCC 700491 / DSM 11845 / VT8) (Marinobacter aquaeolei) protein is DNA mismatch repair protein MutS.